Consider the following 416-residue polypeptide: Phosphatidylserine decarboxylase proenzyme, mitochondrial (416 aa).

Topologically, residues Met1–Leu67 are mitochondrial matrix. A helical transmembrane segment spans residues Arg68–Ser86. Residues Trp87 to Leu416 lie on the Mitochondrial intermembrane side of the membrane. Active-site charge relay system; for autoendoproteolytic cleavage activity residues include Asp198, His274, and Ser385. Ser385 functions as the Schiff-base intermediate with substrate; via pyruvic acid; for decarboxylase activity in the catalytic mechanism. Ser385 is subject to Pyruvic acid (Ser); by autocatalysis.

Belongs to the phosphatidylserine decarboxylase family. PSD-B subfamily. Eukaryotic type I sub-subfamily. In terms of assembly, heterodimer of a large membrane-associated beta subunit and a small pyruvoyl-containing alpha subunit. Pyruvate is required as a cofactor. In terms of processing, is synthesized initially as an inactive proenzyme. Formation of the active enzyme involves a self-maturation process in which the active site pyruvoyl group is generated from an internal serine residue via an autocatalytic post-translational modification. Two non-identical subunits are generated from the proenzyme in this reaction, and the pyruvate is formed at the N-terminus of the alpha chain, which is derived from the carboxyl end of the proenzyme. The autoendoproteolytic cleavage occurs by a canonical serine protease mechanism, in which the side chain hydroxyl group of the serine supplies its oxygen atom to form the C-terminus of the beta chain, while the remainder of the serine residue undergoes an oxidative deamination to produce ammonia and the pyruvoyl prosthetic group on the alpha chain. During this reaction, the Ser that is part of the protease active site of the proenzyme becomes the pyruvoyl prosthetic group, which constitutes an essential element of the active site of the mature decarboxylase.

The protein localises to the mitochondrion inner membrane. Its subcellular location is the cytoplasm. The protein resides in the lipid droplet. The catalysed reaction is a 1,2-diacyl-sn-glycero-3-phospho-L-serine + H(+) = a 1,2-diacyl-sn-glycero-3-phosphoethanolamine + CO2. It participates in phospholipid metabolism; phosphatidylethanolamine biosynthesis. Its function is as follows. Catalyzes the formation of phosphatidylethanolamine (PtdEtn) from phosphatidylserine (PtdSer). Plays a central role in phospholipid metabolism and in the interorganelle trafficking of phosphatidylserine. May be involved in lipid droplet biogenesis at the endoplasmic reticulum membrane. The polypeptide is Phosphatidylserine decarboxylase proenzyme, mitochondrial (Bos taurus (Bovine)).